The following is a 345-amino-acid chain: S-adenosylmethionine:tRNA ribosyltransferase-isomerase (345 aa).

It belongs to the QueA family. As to quaternary structure, monomer.

Its subcellular location is the cytoplasm. It catalyses the reaction 7-aminomethyl-7-carbaguanosine(34) in tRNA + S-adenosyl-L-methionine = epoxyqueuosine(34) in tRNA + adenine + L-methionine + 2 H(+). The protein operates within tRNA modification; tRNA-queuosine biosynthesis. Transfers and isomerizes the ribose moiety from AdoMet to the 7-aminomethyl group of 7-deazaguanine (preQ1-tRNA) to give epoxyqueuosine (oQ-tRNA). The sequence is that of S-adenosylmethionine:tRNA ribosyltransferase-isomerase from Shewanella pealeana (strain ATCC 700345 / ANG-SQ1).